The following is a 212-amino-acid chain: Methylthioribulose-1-phosphate dehydratase (212 aa).

Positions 97 and 99 each coordinate Zn(2+).

It belongs to the aldolase class II family. MtnB subfamily. In terms of assembly, homotetramer. Zn(2+) serves as cofactor.

It carries out the reaction 5-(methylsulfanyl)-D-ribulose 1-phosphate = 5-methylsulfanyl-2,3-dioxopentyl phosphate + H2O. It participates in amino-acid biosynthesis; L-methionine biosynthesis via salvage pathway; L-methionine from S-methyl-5-thio-alpha-D-ribose 1-phosphate: step 2/6. In terms of biological role, catalyzes the dehydration of methylthioribulose-1-phosphate (MTRu-1-P) into 2,3-diketo-5-methylthiopentyl-1-phosphate (DK-MTP-1-P). The protein is Methylthioribulose-1-phosphate dehydratase of Bacillus cereus (strain AH187).